The sequence spans 211 residues: Endonuclease V (211 aa).

Mg(2+) is bound by residues Asp-31 and Glu-95. The disordered stretch occupies residues 182-211 (IYEVKNTPSPNRSRKKRGNRGKDNNNSQGN).

It belongs to the endonuclease V family. Requires Mg(2+) as cofactor.

Its subcellular location is the cytoplasm. It catalyses the reaction Endonucleolytic cleavage at apurinic or apyrimidinic sites to products with a 5'-phosphate.. DNA repair enzyme involved in the repair of deaminated bases. Selectively cleaves double-stranded DNA at the second phosphodiester bond 3' to a deoxyinosine leaving behind the intact lesion on the nicked DNA. The polypeptide is Endonuclease V (Pyrococcus horikoshii (strain ATCC 700860 / DSM 12428 / JCM 9974 / NBRC 100139 / OT-3)).